Consider the following 152-residue polypeptide: Large-conductance mechanosensitive channel (152 aa).

The next 2 helical transmembrane spans lie at 14-34 (VIDL…VTSL) and 81-101 (GLFL…FIAI).

This sequence belongs to the MscL family. Homopentamer.

The protein localises to the cell membrane. In terms of biological role, channel that opens in response to stretch forces in the membrane lipid bilayer. May participate in the regulation of osmotic pressure changes within the cell. The chain is Large-conductance mechanosensitive channel from Clostridium perfringens (strain 13 / Type A).